We begin with the raw amino-acid sequence, 380 residues long: 5-amino-6-(D-ribitylamino)uracil--L-tyrosine 4-hydroxyphenyl transferase (380 aa).

The Radical SAM core domain occupies Val-56–Asn-303. Positions 70, 74, and 77 each coordinate [4Fe-4S] cluster.

This sequence belongs to the radical SAM superfamily. CofH family. In terms of assembly, consists of two subunits, CofG and CofH. [4Fe-4S] cluster serves as cofactor.

It catalyses the reaction 5-amino-6-(D-ribitylamino)uracil + L-tyrosine + S-adenosyl-L-methionine = 5-amino-5-(4-hydroxybenzyl)-6-(D-ribitylimino)-5,6-dihydrouracil + 2-iminoacetate + 5'-deoxyadenosine + L-methionine + H(+). It participates in cofactor biosynthesis; coenzyme F0 biosynthesis. Functionally, catalyzes the radical-mediated synthesis of 5-amino-5-(4-hydroxybenzyl)-6-(D-ribitylimino)-5,6-dihydrouracil from 5-amino-6-(D-ribitylamino)uracil and L-tyrosine. The sequence is that of 5-amino-6-(D-ribitylamino)uracil--L-tyrosine 4-hydroxyphenyl transferase from Nostoc punctiforme (strain ATCC 29133 / PCC 73102).